Here is a 350-residue protein sequence, read N- to C-terminus: tRNA uridine(34) hydroxylase (350 aa).

The region spanning 146-240 (DDPDAIFIDM…YARRAREQGL (95 aa)) is the Rhodanese domain. The active-site Cysteine persulfide intermediate is the Cys-200. Residues 318–350 (QRRRRAGREKGNKIFNKSRGRLNSKLGIPDPTE) form a disordered region.

This sequence belongs to the TrhO family.

It catalyses the reaction uridine(34) in tRNA + AH2 + O2 = 5-hydroxyuridine(34) in tRNA + A + H2O. Catalyzes oxygen-dependent 5-hydroxyuridine (ho5U) modification at position 34 in tRNAs. The sequence is that of tRNA uridine(34) hydroxylase from Salmonella arizonae (strain ATCC BAA-731 / CDC346-86 / RSK2980).